Reading from the N-terminus, the 727-residue chain is MDTKVETGGKCPVAHGPAGAKGRGNRDWWPEQLDVQILHQKNKIADPMGPDFDYAEEFRKLDYEALKSDLHALMTDSQDWWPADFGHYGGLFVRMAWHSAGTYRITDGRGGAGAGQQRFAPLNSWPDNANLDKARRLLWPIKQKYGNKISWADLFILTGNVALESMGFKTFGFAGGRADTWEPEELFWGPEGTWLGDERYSGERQLSEPLGAVQMGLIYVNPEGPNGNPDPIAAARDIRETFSRMAMNDEETVALIAGGHTFGKTHGAGDPSLIGAEPEGGALEDQGLGWKSKFGTGFGADTITGGPEVTWTQTPTRWSNFFFENLFNFEWELTKSPAGAHQWKAKNAEPSIPDAHDPSKKHLPTMLTTDLSLRFDPAYEKISRRFLENPDQFADAFARAWFKLTHRDMGPKVRYVGPEVPSEDLIWQDVIPPVDHPLVDDRDVADLKAKVIASGLSVQELVSTAWASASTFRGSDKRGGANGARIRLAPQKDWDVNHPAQLAKVLSVLEGFQQEFNAGQSAGKKISLADLIVLAGAAGVEKAAKAGGHDVTVPFTPGRTDASQEQTDVASFNALKPRADAFRNYLSGHQFMKPEEALVDRARLLTLTAPEMTVLIGGLRVLKAGQPEHGVLTRNPEALTNDFFVNLLDMRTQWAPVAGKEGVYEGRDRKSGELLWTGTRVDLIFGSHSQLRALAEVYAQSDIKEKFVKDFVAAWTKVMNADRFDLV.

Positions 1-26 are disordered; it reads MDTKVETGGKCPVAHGPAGAKGRGNR. A cross-link (tryptophyl-tyrosyl-methioninium (Trp-Tyr) (with M-245)) is located at residues 97–219; sequence WHSAGTYRIT…LGAVQMGLIY (123 aa). H98 (proton acceptor) is an active-site residue. The tryptophyl-tyrosyl-methioninium (Tyr-Met) (with W-97) cross-link spans 219 to 245; it reads YVNPEGPNGNPDPIAAARDIRETFSRM. H260 contacts heme b.

Belongs to the peroxidase family. Peroxidase/catalase subfamily. Homodimer or homotetramer. Requires heme b as cofactor. Formation of the three residue Trp-Tyr-Met cross-link is important for the catalase, but not the peroxidase activity of the enzyme.

The catalysed reaction is H2O2 + AH2 = A + 2 H2O. It catalyses the reaction 2 H2O2 = O2 + 2 H2O. Bifunctional enzyme with both catalase and broad-spectrum peroxidase activity. The sequence is that of Catalase-peroxidase from Allorhizobium ampelinum (strain ATCC BAA-846 / DSM 112012 / S4) (Agrobacterium vitis (strain S4)).